Consider the following 956-residue polypeptide: DNA replication helicase (956 aa).

120–127 (GTAGAGKT) contacts ATP. Positions 658 to 694 (PINNHVDADSSQGGQSVPVSQRMEHGQEETHDIPCLS) are disordered. A compositionally biased stretch (low complexity) spans 667 to 678 (SSQGGQSVPVSQ). Positions 679 to 694 (RMEHGQEETHDIPCLS) are enriched in basic and acidic residues.

Belongs to the herpesviridae helicase family. As to quaternary structure, associates with the primase and the primase-associated factor to form the helicase-primase complex.

It localises to the host nucleus. Functionally, component of the helicase/primase complex. Unwinds the DNA at the replication forks and generates single-stranded DNA for both leading and lagging strand synthesis. The primase synthesizes short RNA primers on the lagging strand that the polymerase elongates using dNTPs. Possesses helicase-like motifs and therefore may act as the helicase subunit of the complex. The chain is DNA replication helicase from Human cytomegalovirus (strain AD169) (HHV-5).